The sequence spans 513 residues: 2-isopropylmalate synthase (513 aa).

The Pyruvate carboxyltransferase domain occupies 4-268 (IKIFDTTLRD…ETGIKTELIY (265 aa)). Residues aspartate 13, histidine 203, histidine 205, and asparagine 239 each contribute to the Mn(2+) site. A regulatory domain region spans residues 392–513 (KLVHFHVHTG…GLLRKNGGAE (122 aa)).

This sequence belongs to the alpha-IPM synthase/homocitrate synthase family. LeuA type 1 subfamily. As to quaternary structure, homodimer. Mn(2+) is required as a cofactor.

Its subcellular location is the cytoplasm. The catalysed reaction is 3-methyl-2-oxobutanoate + acetyl-CoA + H2O = (2S)-2-isopropylmalate + CoA + H(+). Its pathway is amino-acid biosynthesis; L-leucine biosynthesis; L-leucine from 3-methyl-2-oxobutanoate: step 1/4. In terms of biological role, catalyzes the condensation of the acetyl group of acetyl-CoA with 3-methyl-2-oxobutanoate (2-ketoisovalerate) to form 3-carboxy-3-hydroxy-4-methylpentanoate (2-isopropylmalate). The protein is 2-isopropylmalate synthase of Thermotoga maritima (strain ATCC 43589 / DSM 3109 / JCM 10099 / NBRC 100826 / MSB8).